A 117-amino-acid polypeptide reads, in one-letter code: Large ribosomal subunit protein uL18 (117 aa).

Belongs to the universal ribosomal protein uL18 family. As to quaternary structure, part of the 50S ribosomal subunit; part of the 5S rRNA/L5/L18/L25 subcomplex. Contacts the 5S and 23S rRNAs.

This is one of the proteins that bind and probably mediate the attachment of the 5S RNA into the large ribosomal subunit, where it forms part of the central protuberance. This is Large ribosomal subunit protein uL18 from Colwellia psychrerythraea (strain 34H / ATCC BAA-681) (Vibrio psychroerythus).